Reading from the N-terminus, the 453-residue chain is Dibenzothiophene-sulfone monooxygenase (453 aa).

Asp59, Thr106, His156, Tyr160, and Ser231 together coordinate FMN.

This sequence belongs to the NtaA/SnaA/DszA monooxygenase family. In terms of assembly, homodimer.

It is found in the cytoplasm. The catalysed reaction is dibenzothiophene 5,5-dioxide + FMNH2 + NADH + O2 = 2'-hydroxybiphenyl-2-sulfinate + FMN + NAD(+) + H2O + H(+). The protein operates within sulfur metabolism; dibenzothiophene degradation. Functionally, catalyzes the second step of the '4S' desulfurization pathway that removes covalently bound sulfur from dibenzothiophene (DBT) without breaking carbon-carbon bonds. Metabolizes DBT-sulfone (DBTO2 or DBT 5,5-dioxide) to 2-(2'-hydroxyphenyl)benzene sulphinate (HBPS). The protein is Dibenzothiophene-sulfone monooxygenase of Rhodococcus erythropolis (Arthrobacter picolinophilus).